A 284-amino-acid polypeptide reads, in one-letter code: MSLTDLTSLETIIETAFDNRDGVNVSTKGEVRDAVNTSLQLLDSGKVRVAEKQADGNWKVNQWLKKAVLLSFRLNDMEIVTGGPGESTWWDKVPSKFENWGENQFRAAGFRAVPNAVVRRSAYVAKNVVLMPSFVNLGAYVDEGTMVDTWATVGSCAQIGKNVHLSGGVGIGGVLEPLQAGPTIIEDNCFIGARSEVVEGCIVREGAVLGMGVFIGKSTKIVDRATGEITYGEVPPYSVVVAGTMPGKPFPNGEPGPSLYCAVIVKRVDEKTRSKTGINELLRD.

2 residues coordinate substrate: R111 and D148.

The protein belongs to the transferase hexapeptide repeat family. In terms of assembly, homotrimer.

The protein localises to the cytoplasm. It carries out the reaction (S)-2,3,4,5-tetrahydrodipicolinate + succinyl-CoA + H2O = (S)-2-succinylamino-6-oxoheptanedioate + CoA. The protein operates within amino-acid biosynthesis; L-lysine biosynthesis via DAP pathway; LL-2,6-diaminopimelate from (S)-tetrahydrodipicolinate (succinylase route): step 1/3. The protein is 2,3,4,5-tetrahydropyridine-2,6-dicarboxylate N-succinyltransferase of Agrobacterium fabrum (strain C58 / ATCC 33970) (Agrobacterium tumefaciens (strain C58)).